Reading from the N-terminus, the 1849-residue chain is Immunoglobulin A1 protease autotransporter (1849 aa).

A signal peptide spans 1–25 (MLNKKFKLNFIALTVAYALTPYTEA). The region spanning 26-343 (ALVRDDVDYQ…NIYKHEFAEK (318 aa)) is the Peptidase S6 domain. The active site involves serine 299. The disordered stretch occupies residues 998–1538 (VEKRNQTVDT…EPVELPTENA (541 aa)). Residues 1004–1015 (TVDTTNITTPND) show a composition bias toward polar residues. Positions 1066 to 1077 (EETNTANSTETA) are enriched in low complexity. 2 stretches are compositionally biased toward polar residues: residues 1079–1097 (KSDT…VPSE) and 1138–1151 (VEAN…TQSE). The segment covering 1152-1166 (GKTEETQTAETKSEP) has biased composition (basic and acidic residues). Residues 1167-1184 (TESVTVSENQPEKTVSQS) are compositionally biased toward polar residues. Residues 1185 to 1205 (TEDKVVVEKEEKAKVETEETQ) show a composition bias toward basic and acidic residues. Over residues 1237 to 1268 (ALQQTQPTTVAAAETTSPNSKPAEETQQPSEK) the composition is skewed to polar residues. Residues 1291-1301 (ETAKVEKEKTQ) show a composition bias toward basic and acidic residues. Composition is skewed to low complexity over residues 1314–1330 (QEQP…PQAE), 1345–1361 (PQPQ…VPTT), and 1369–1381 (KPAA…AKPQ). Polar residues predominate over residues 1388–1437 (NVSTVNTKEPQSQTSATVSTEQPAKETSSNVEQPAPENSINTGSATTMTE). Residues 1438-1457 (TAEKSDKPQMETVTENDRQP) show a composition bias toward basic and acidic residues. Over residues 1493-1513 (EETTVASTQETTVDNSVSTPK) the composition is skewed to low complexity. In terms of domain architecture, Autotransporter spans 1597–1849 (NNEGQYNVWI…TAEVKLSFSF (253 aa)).

The protein resides in the periplasm. It is found in the secreted. It localises to the cell surface. Its subcellular location is the cell outer membrane. It catalyses the reaction Cleavage of immunoglobulin A molecules at certain Pro-|-Xaa bonds in the hinge region. No small molecule substrates are known.. In terms of biological role, virulence factor; cleaves host immunoglobulin A producing intact Fc and Fab fragments. The protein is Immunoglobulin A1 protease autotransporter (iga) of Haemophilus influenzae.